The chain runs to 61 residues: UPF0434 protein PSEEN1604 (61 aa).

It belongs to the UPF0434 family.

This Pseudomonas entomophila (strain L48) protein is UPF0434 protein PSEEN1604.